Here is a 344-residue protein sequence, read N- to C-terminus: Dihydroorotase (344 aa).

Zn(2+) contacts are provided by His13 and His15. Substrate contacts are provided by residues 15-17 (HLR) and Asn41. Residues Lys99, His136, and His174 each coordinate Zn(2+). N6-carboxylysine is present on Lys99. His136 serves as a coordination point for substrate. Leu219 is a binding site for substrate. Asp247 provides a ligand contact to Zn(2+). Asp247 is an active-site residue. 2 residues coordinate substrate: His251 and Ala263.

The protein belongs to the metallo-dependent hydrolases superfamily. DHOase family. Class II DHOase subfamily. As to quaternary structure, homodimer. It depends on Zn(2+) as a cofactor.

The catalysed reaction is (S)-dihydroorotate + H2O = N-carbamoyl-L-aspartate + H(+). The protein operates within pyrimidine metabolism; UMP biosynthesis via de novo pathway; (S)-dihydroorotate from bicarbonate: step 3/3. Functionally, catalyzes the reversible cyclization of carbamoyl aspartate to dihydroorotate. This Microcystis aeruginosa (strain NIES-843 / IAM M-2473) protein is Dihydroorotase.